The sequence spans 214 residues: Uracil phosphoribosyltransferase (214 aa).

Residues Arg-81, Arg-106, and 133 to 141 (DPMLATGNS) contribute to the 5-phospho-alpha-D-ribose 1-diphosphate site. Residues Ile-196 and 201 to 203 (GDA) each bind uracil. Asp-202 contacts 5-phospho-alpha-D-ribose 1-diphosphate.

This sequence belongs to the UPRTase family. Requires Mg(2+) as cofactor.

The catalysed reaction is UMP + diphosphate = 5-phospho-alpha-D-ribose 1-diphosphate + uracil. It participates in pyrimidine metabolism; UMP biosynthesis via salvage pathway; UMP from uracil: step 1/1. With respect to regulation, allosterically activated by GTP. In terms of biological role, catalyzes the conversion of uracil and 5-phospho-alpha-D-ribose 1-diphosphate (PRPP) to UMP and diphosphate. In Legionella pneumophila subsp. pneumophila (strain Philadelphia 1 / ATCC 33152 / DSM 7513), this protein is Uracil phosphoribosyltransferase.